We begin with the raw amino-acid sequence, 300 residues long: 7-methylguanosine phosphate-specific 5'-nucleotidase (300 aa).

The Nucleophile role is filled by D41. Mg(2+)-binding residues include D41 and D43. The Proton donor role is filled by D43. Residue E88 participates in CMP binding. N(7)-methyl-GMP is bound at residue E88. Substrate contacts are provided by residues 156-157 (SA) and K205. D230 contributes to the Mg(2+) binding site. Residue K256 is modified to N6-acetyllysine.

It belongs to the pyrimidine 5'-nucleotidase family. As to quaternary structure, monomer.

The protein localises to the cytoplasm. It catalyses the reaction N(7)-methyl-GMP + H2O = N(7)-methylguanosine + phosphate. The catalysed reaction is CMP + H2O = cytidine + phosphate. It carries out the reaction a ribonucleoside 5'-phosphate + H2O = a ribonucleoside + phosphate. In terms of biological role, specifically hydrolyzes 7-methylguanosine monophosphate (m(7)GMP) to 7-methylguanosine and inorganic phosphate. The specific activity for m(7)GMP may protect cells against undesired salvage of m(7)GMP and its incorporation into nucleic acids. Also has weak activity for CMP. UMP and purine nucleotides are poor substrates. This is 7-methylguanosine phosphate-specific 5'-nucleotidase (Nt5c3b) from Rattus norvegicus (Rat).